Reading from the N-terminus, the 435-residue chain is UPF0053 protein Rv2366c (435 aa).

Residues 1–185 (MTGYYQLLGS…QQRGVVAADE (185 aa)) form the CNNM transmembrane domain. 2 consecutive transmembrane segments (helical) span residues 7-27 (LLGS…DAAI) and 89-109 (VWGL…VVGV). CBS domains follow at residues 204–267 (MVPR…GRET) and 272–329 (VMRP…IADE).

The protein belongs to the UPF0053 family.

The protein resides in the cell membrane. The chain is UPF0053 protein Rv2366c from Mycobacterium tuberculosis (strain ATCC 25618 / H37Rv).